Here is a 228-residue protein sequence, read N- to C-terminus: Large ribosomal subunit protein bL25 (228 aa).

The segment at 198–228 (AAIAEAQSAEAAEEKAEAEAEATNEKNDTEE) is disordered. A compositionally biased stretch (basic and acidic residues) spans 209–228 (AEEKAEAEAEATNEKNDTEE).

It belongs to the bacterial ribosomal protein bL25 family. CTC subfamily. As to quaternary structure, part of the 50S ribosomal subunit; part of the 5S rRNA/L5/L18/L25 subcomplex. Contacts the 5S rRNA. Binds to the 5S rRNA independently of L5 and L18.

This is one of the proteins that binds to the 5S RNA in the ribosome where it forms part of the central protuberance. In Methylorubrum populi (strain ATCC BAA-705 / NCIMB 13946 / BJ001) (Methylobacterium populi), this protein is Large ribosomal subunit protein bL25.